The primary structure comprises 123 residues: Proteasome assembly chaperone 4 (123 aa).

It belongs to the PSMG4 family. As to quaternary structure, interacts with PSMG3. Associates with alpha subunits of the 20S proteasome.

Chaperone protein which promotes assembly of the 20S proteasome. This Homo sapiens (Human) protein is Proteasome assembly chaperone 4.